Here is a 34-residue protein sequence, read N- to C-terminus: Thermomycolin (34 aa).

The active-site Charge relay system is the Ser-33.

Belongs to the peptidase S8 family.

The protein localises to the secreted. It carries out the reaction Rather non-specific hydrolysis of proteins. Preferential cleavage: -Ala-|-Xaa-, -Tyr-|-Xaa-, -Phe-|-Xaa- in small molecular substrates.. Its function is as follows. This is an extracellular proteinase with a general specificity for apolar residues. The sequence is that of Thermomycolin from Malbranchea cinnamomea (Thermophilic fungus).